A 419-amino-acid polypeptide reads, in one-letter code: Phosphoglycerate kinase (419 aa).

(2R)-3-phosphoglycerate is bound by residues V24, D25, F26, N27, R40, S63, H64, G66, R67, L122, R123, H169, and R170. Residue G213 participates in ADP binding. Residue G213 participates in CDP binding. Residues A214 and K215 each coordinate AMP. Position 214 (A214) interacts with ATP. Mg(2+) is bound at residue A214. Residues A217 and D218 each contribute to the Mg(2+) site. Residue D218 participates in CDP binding. K219 is a binding site for AMP. An ATP-binding site is contributed by K219. An ADP-binding site is contributed by G237. G237 contributes to the CDP binding site. Residues G238 and G313 each contribute to the AMP site. Positions 238 and 313 each coordinate ATP. Positions 338 and 343 each coordinate CDP. F343 is an ADP binding site. E344 is an AMP binding site. Residues E344, D375, and T376 each contribute to the ATP site. A Mg(2+)-binding site is contributed by D375.

Belongs to the phosphoglycerate kinase family. In terms of assembly, monomer. The cofactor is Mg(2+).

The enzyme catalyses (2R)-3-phosphoglycerate + ATP = (2R)-3-phospho-glyceroyl phosphate + ADP. It participates in carbohydrate degradation; glycolysis; pyruvate from D-glyceraldehyde 3-phosphate: step 2/5. The protein is Phosphoglycerate kinase (PGK) of Sterkiella nova (Ciliate).